The chain runs to 474 residues: Synaptotagmin-15B (474 aa).

Disordered regions lie at residues 1–62 and 75–128; these read MGVV…AASG and PRAA…PPAV. Positions 75 to 88 are enriched in low complexity; sequence PRAAAGHQQHHGPP. 2 consecutive C2 domains span residues 200 to 317 and 331 to 452; these read CLGR…RRVI and EFGD…EHWD.

This sequence belongs to the synaptotagmin family.

The protein is Synaptotagmin-15B of Homo sapiens (Human).